The primary structure comprises 519 residues: Pleckstrin homology domain-containing family A member 8 (519 aa).

A PH domain is found at 1–93; it reads MEGVLYKWTN…WLVALGSAKA (93 aa). Threonine 139 carries the post-translational modification Phosphothreonine. A Phosphoserine modification is found at serine 145. The residue at position 153 (threonine 153) is a Phosphothreonine. Residues 275-302 are disordered; that stretch reads GEENLESHDKDPAQPGSDSVCSPESPWE. Residues 330–473 are glycolipid transfer protein homology domain; it reads IPTEAFLASC…EDFVAALTIK (144 aa).

In terms of assembly, homodimer. Interacts with ARF1; the interaction together with phosphatidylinositol 4-phosphate binding is required for FAPP2 GlcCer transfer ability.

Its subcellular location is the golgi apparatus. It is found in the trans-Golgi network membrane. The protein resides in the membrane. Its function is as follows. Cargo transport protein that is required for apical transport from the trans-Golgi network (TGN). Transports AQP2 from the trans-Golgi network (TGN) to sites of AQP2 phosphorylation. Mediates the non-vesicular transport of glucosylceramide (GlcCer) from the trans-Golgi network (TGN) to the plasma membrane and plays a pivotal role in the synthesis of complex glycosphingolipids. Binding of both phosphatidylinositol 4-phosphate (PIP) and ARF1 are essential for the GlcCer transfer ability. Also required for primary cilium formation, possibly by being involved in the transport of raft lipids to the apical membrane, and for membrane tubulation. The protein is Pleckstrin homology domain-containing family A member 8 (Plekha8) of Mus musculus (Mouse).